The chain runs to 471 residues: Light-independent protochlorophyllide reductase subunit N (471 aa).

Positions 22, 47, and 107 each coordinate [4Fe-4S] cluster.

It belongs to the BchN/ChlN family. Protochlorophyllide reductase is composed of three subunits; ChlL, ChlN and ChlB. Forms a heterotetramer of two ChlB and two ChlN subunits. Requires [4Fe-4S] cluster as cofactor.

It is found in the plastid. It localises to the chloroplast. It carries out the reaction chlorophyllide a + oxidized 2[4Fe-4S]-[ferredoxin] + 2 ADP + 2 phosphate = protochlorophyllide a + reduced 2[4Fe-4S]-[ferredoxin] + 2 ATP + 2 H2O. It participates in porphyrin-containing compound metabolism; chlorophyll biosynthesis (light-independent). In terms of biological role, component of the dark-operative protochlorophyllide reductase (DPOR) that uses Mg-ATP and reduced ferredoxin to reduce ring D of protochlorophyllide (Pchlide) to form chlorophyllide a (Chlide). This reaction is light-independent. The NB-protein (ChlN-ChlB) is the catalytic component of the complex. This is Light-independent protochlorophyllide reductase subunit N from Anthoceros angustus (Hornwort).